Here is a 570-residue protein sequence, read N- to C-terminus: Auxin efflux carrier component 6 (570 aa).

At 1–6 (MITGNE) the chain is on the extracellular side. Residues 7-27 (FYTVMCAMAPLYFAMFVAYGS) traverse the membrane as a helical segment. The Cytoplasmic portion of the chain corresponds to 28–38 (VKWCKIFTPAQ). A helical membrane pass occupies residues 39–59 (CSGINRFVSVFAVPVLSFHFI). Position 51 (Val-51) interacts with (indol-3-yl)acetate. Residues 60–70 (SQNNPYKMDTM) are Extracellular-facing. Residues 71 to 91 (FILADTLSKIFVFVLLSLWAV) traverse the membrane as a helical segment. The Cytoplasmic portion of the chain corresponds to 92-100 (FFKAGGLDW). A helical transmembrane segment spans residues 101–121 (LITLFSIATLPNTLVMGIPLL). (indol-3-yl)acetate-binding residues include Asn-112 and Leu-114. At 122 to 131 (QAMYGDYTQT) the chain is on the extracellular side. A helical transmembrane segment spans residues 132-152 (LMVQLVVLQCIIWYTLLLFLF). (indol-3-yl)acetate is bound at residue Tyr-145. Topologically, residues 153–430 (ELRAARLLIR…LSRNPNTYSS (278 aa)) are cytoplasmic. Residues Ser-230 and Ser-308 each carry the phosphoserine modification. Residues 431–451 (LLGLVWSLISFKWNIPMPNIV) form a helical membrane-spanning segment. Topologically, residues 452 to 454 (DFS) are extracellular. Residues 455-475 (IKIISDAGLGMAMFSLGLFMA) traverse the membrane as a helical segment. Topologically, residues 476 to 491 (LQPKMIPCGAKKATMG) are cytoplasmic. A helical transmembrane segment spans residues 492–512 (MLIRFISGPLFMAGASLLVGL). Residues 513–515 (RGS) lie on the Extracellular side of the membrane. Residues 516–536 (RLHAAIVQAALPQGIVPFVFA) form a helical membrane-spanning segment. Residues Ile-530 and Val-531 each contribute to the (indol-3-yl)acetate site. The Cytoplasmic portion of the chain corresponds to 537-549 (REYNLHPDLLSTL). Residues 550-570 (VIFGMIVSLPVTILYYVLLGL) traverse the membrane as a helical segment.

The protein belongs to the auxin efflux carrier (TC 2.A.69.1) family. As to quaternary structure, homodimer. As to expression, expressed in the vasculature of the primary root, cotyledons, floral stem, sepals and the main transmitting tract of the reproductive silique. Expressed in embryos, shoot meristem, root tip and lateral root meristems. Expressed in the nectaries and the floral organ boundaries of the anthers. Detected in pollen. Expressed in broad subepidermal domains that narrowed to sites of vein formation. Expressed in veins of mature leaves.

It is found in the endoplasmic reticulum membrane. Functionally, component of the intracellular auxin-transport pathway. Regulates auxin transport and auxin homeostasis. Directly involved in the regulation of nectar production. Involved in unfolded protein response (UPR) activation. Involved in the control of vein patterning. Redundantly with PIN8, inhibits the vein-formation-promoting functions of PIN5. PIN5, PIN6, and PIN8 control vein network geometry, but they are expressed in mutually exclusive domains of leaf vascular cells. The protein is Auxin efflux carrier component 6 of Arabidopsis thaliana (Mouse-ear cress).